Here is an 87-residue protein sequence, read N- to C-terminus: MVLMGEKVRDREHHERLFKASMSPIRRQIVAAIGVQGKTREELKKELELSDFQFKFNLDWLIREGFVKEEDGKLKLTDDGIELLEAG.

To A.fulgidus AF_1348 and AF_1363.

This is an uncharacterized protein from Archaeoglobus fulgidus (strain ATCC 49558 / DSM 4304 / JCM 9628 / NBRC 100126 / VC-16).